The sequence spans 231 residues: MIP18 family protein YHR122W (231 aa).

Disordered regions lie at residues 1–26 (MSEF…DSTK) and 75–100 (LTSD…EEEE). S2 is modified (N-acetylserine). Over residues 76–90 (TSDEDSLPAESEDES) the composition is skewed to acidic residues.

It belongs to the MIP18 family.

Functionally, may play a role in chromosome segregation through establishment of sister chromatid cohesion. In Saccharomyces cerevisiae (strain ATCC 204508 / S288c) (Baker's yeast), this protein is MIP18 family protein YHR122W.